A 77-amino-acid polypeptide reads, in one-letter code: Defensin-like protein 91 (77 aa).

Positions 1–27 (METKKISYFLLPSLMIVALIFQPMCSA) are cleaved as a signal peptide. 4 cysteine pairs are disulfide-bonded: C38/C75, C43/C64, C49/C73, and C53/C74.

The protein belongs to the DEFL family.

The protein resides in the secreted. The sequence is that of Defensin-like protein 91 (LCR47) from Arabidopsis thaliana (Mouse-ear cress).